The sequence spans 163 residues: Nodulin-13 (163 aa).

Residues Q68 and Y82 each coordinate kinetin. 2 residues coordinate N(6)-dimethylallyladenine: Q68 and Y82. 3 residues coordinate trans-zeatin: Q68, Y82, and Y133.

The protein belongs to the BetVI family. As to quaternary structure, homodimer. Expressed in nodules, but not in leaves, stems, flowers and roots. Specifically located in the nodule cortex.

May be involved in nodule organogenesis rather in the processes related to nitrogen fixation or interactions with the bacteria. May regulate nodulation by controlling the levels of freely available cytokinins. This chain is Nodulin-13 (N13), found in Medicago truncatula (Barrel medic).